The primary structure comprises 529 residues: Ribonuclease Y (529 aa).

Residues 4–24 form a helical membrane-spanning segment; that stretch reads GLIYISLEVLVACLITALIMY. Residues 216-297 enclose the KH domain; it reads LTTRIALPCS…NRIEEVYHRV (82 aa). The HD domain occupies 342–435; that stretch reads ALQHSKEVAL…VCAADALSAG (94 aa).

This sequence belongs to the RNase Y family.

It localises to the cell membrane. Endoribonuclease that initiates mRNA decay. The protein is Ribonuclease Y of Helicobacter pylori (strain HPAG1).